The primary structure comprises 412 residues: uncharacterized protein (412 aa).

This sequence belongs to the PQQ oxidoreductase GdhB family. Requires pyrroloquinoline quinone as cofactor.

This is an uncharacterized protein from Synechocystis sp. (strain ATCC 27184 / PCC 6803 / Kazusa).